A 69-amino-acid chain; its full sequence is DNA gyrase inhibitor YacG (69 aa).

Positions 14, 17, 33, and 37 each coordinate Zn(2+).

The protein belongs to the DNA gyrase inhibitor YacG family. As to quaternary structure, interacts with GyrB. Zn(2+) serves as cofactor.

Functionally, inhibits all the catalytic activities of DNA gyrase by preventing its interaction with DNA. Acts by binding directly to the C-terminal domain of GyrB, which probably disrupts DNA binding by the gyrase. The polypeptide is DNA gyrase inhibitor YacG (Aliivibrio salmonicida (strain LFI1238) (Vibrio salmonicida (strain LFI1238))).